Consider the following 114-residue polypeptide: UPF0757 protein YmgG (114 aa).

The protein belongs to the UPF0757 family.

This is UPF0757 protein YmgG from Escherichia fergusonii (strain ATCC 35469 / DSM 13698 / CCUG 18766 / IAM 14443 / JCM 21226 / LMG 7866 / NBRC 102419 / NCTC 12128 / CDC 0568-73).